Here is a 937-residue protein sequence, read N- to C-terminus: Protocadherin alpha-7 (937 aa).

A signal peptide spans 1–29 (MVCPNGYDPGGRHLLLFIIILAAWEAGRG). Cadherin domains follow at residues 30–133 (QLHY…PPVF), 134–242 (PATQ…APVF), 243–350 (DRTL…APQL), 351–455 (TLTS…APAF), 456–565 (AQPE…APAL), and 581–678 (VPRS…APKA). At 30–697 (QLHYSVPEEA…GPETELVDVN (668 aa)) the chain is on the extracellular side. Cys96 and Cys102 form a disulfide bridge. 2 N-linked (GlcNAc...) asparagine glycosylation sites follow: Asn254 and Asn265. Asn548 carries an N-linked (GlcNAc...) asparagine glycan. Residues 698-718 (VYLIIAICAVSSLLVLTLLLY) form a helical membrane-spanning segment. Topologically, residues 719–937 (TALRCSAPSS…GNSTTDNSDQ (219 aa)) are cytoplasmic. Disordered regions lie at residues 756–795 (QRVC…DWRY) and 817–843 (AGPG…EVSP). PXXP repeat units lie at residues 774 to 777 (PSLP), 786 to 789 (PRQP), 819 to 822 (PGGP), 860 to 863 (PGNP), and 878 to 881 (PGSP). A 5 X 4 AA repeats of P-X-X-P region spans residues 774–881 (PSLPQGPSST…PDKFIIPGSP (108 aa)). The segment covering 775 to 787 (SLPQGPSSTDNPR) has biased composition (polar residues). Residues 888-937 (QEPANSQIDKSDFITFGKKEETKKKKKKKKGNKTQEKKEKGNSTTDNSDQ) are disordered. Residues 896–910 (DKSDFITFGKKEETK) show a composition bias toward basic and acidic residues.

Forms homodimers in trans (molecules expressed by two different cells). Forms promiscuous heterodimers in cis (at the plasma membrane of the same cell) with other protocadherins.

It is found in the cell membrane. Functionally, calcium-dependent cell-adhesion protein involved in cells self-recognition and non-self discrimination. Thereby, it is involved in the establishment and maintenance of specific neuronal connections in the brain. The chain is Protocadherin alpha-7 from Pan troglodytes (Chimpanzee).